Reading from the N-terminus, the 298-residue chain is GTP cyclohydrolase FolE2 (298 aa).

It belongs to the GTP cyclohydrolase IV family.

It carries out the reaction GTP + H2O = 7,8-dihydroneopterin 3'-triphosphate + formate + H(+). It participates in cofactor biosynthesis; 7,8-dihydroneopterin triphosphate biosynthesis; 7,8-dihydroneopterin triphosphate from GTP: step 1/1. In terms of biological role, converts GTP to 7,8-dihydroneopterin triphosphate. This is GTP cyclohydrolase FolE2 from Neisseria meningitidis serogroup A / serotype 4A (strain DSM 15465 / Z2491).